The primary structure comprises 424 residues: Gamma-glutamyl phosphate reductase (424 aa).

It belongs to the gamma-glutamyl phosphate reductase family.

Its subcellular location is the cytoplasm. It catalyses the reaction L-glutamate 5-semialdehyde + phosphate + NADP(+) = L-glutamyl 5-phosphate + NADPH + H(+). The protein operates within amino-acid biosynthesis; L-proline biosynthesis; L-glutamate 5-semialdehyde from L-glutamate: step 2/2. In terms of biological role, catalyzes the NADPH-dependent reduction of L-glutamate 5-phosphate into L-glutamate 5-semialdehyde and phosphate. The product spontaneously undergoes cyclization to form 1-pyrroline-5-carboxylate. In Dehalococcoides mccartyi (strain CBDB1), this protein is Gamma-glutamyl phosphate reductase.